A 521-amino-acid chain; its full sequence is Probable rhamnogalacturonase B (521 aa).

The N-terminal stretch at 1 to 21 is a signal peptide; it reads MRLHAFTLLSLLGLVPSFAAA. The cysteines at positions 42 and 68 are disulfide-linked. Residue asparagine 145 is glycosylated (N-linked (GlcNAc...) asparagine). Catalysis depends on aspartate 219, which acts as the Proton donor. Cysteine 221 and cysteine 238 form a disulfide bridge. Residue asparagine 239 is glycosylated (N-linked (GlcNAc...) asparagine). Histidine 294 is a catalytic residue. N-linked (GlcNAc...) asparagine glycosylation is present at asparagine 321. Cystine bridges form between cysteine 344–cysteine 350 and cysteine 372–cysteine 381. Positions 462–521 are disordered; it reads ETPAAASRSEQVVQGAPQETGQSAPESAGPVPSGNPGPVPTGGSRPSRHRHGHHHFGSAI. Over residues 469-486 the composition is skewed to polar residues; that stretch reads RSEQVVQGAPQETGQSAP. A compositionally biased stretch (basic residues) spans 507-521; sequence PSRHRHGHHHFGSAI.

The protein belongs to the glycosyl hydrolase 28 family.

It is found in the secreted. It carries out the reaction Endohydrolysis of alpha-D-GalA-(1-&gt;2)-alpha-L-Rha glycosidic bond in the rhamnogalacturonan I backbone with initial inversion of anomeric configuration releasing oligosaccharides with beta-D-GalA at the reducing end.. Pectinolytic enzymes consist of four classes of enzymes: pectine lyase, polygalacturonase, pectin methylesterase and rhamnogalacturonase. Hydrolyzes alpha-D-galacturonopyranosyl-(1,2)-alpha-L-rhamnopyranosyl linkages in the backbone of the hairy regions of pectins. This Aspergillus fumigatus (strain ATCC MYA-4609 / CBS 101355 / FGSC A1100 / Af293) (Neosartorya fumigata) protein is Probable rhamnogalacturonase B (rhgB).